Consider the following 332-residue polypeptide: 3-ketodihydrosphingosine reductase (332 aa).

Residues 1–25 (MLLLAAAGLVAFVLLLYMVSPLISP) form the signal peptide. At 26-270 (KPLALPGAHV…GNFNSSIGSD (245 aa)) the chain is on the cytoplasmic side. G39, S41, S42, G43, R64, K68, and D93 together coordinate NADPH. The short motif at 39 to 43 (GGSSG) is the GXSXG element. The active-site Proton donor is S172. Y186 serves as the catalytic Proton acceptor. 2 residues coordinate NADP(+): Y186 and K190. K190 (lowers pKa of active site Tyr) is an active-site residue. A helical membrane pass occupies residues 271–291 (GYMLSSLTCGMAPVTSITEGL). At 292-293 (QQ) the chain is on the lumenal side. A helical transmembrane segment spans residues 294–314 (VVTMGLFRTIALFYLGSFDNI). Over 315 to 332 (VRRCMVQKAKPEVVDKTA) the chain is Cytoplasmic.

Belongs to the short-chain dehydrogenases/reductases (SDR) family.

It localises to the endoplasmic reticulum membrane. The catalysed reaction is sphinganine + NADP(+) = 3-oxosphinganine + NADPH + H(+). Its pathway is lipid metabolism; sphingolipid metabolism. Its function is as follows. Catalyzes the reduction of 3'-oxosphinganine (3-ketodihydrosphingosine/KDS) to sphinganine (dihydrosphingosine/DHS), the second step of de novo sphingolipid biosynthesis. The polypeptide is 3-ketodihydrosphingosine reductase (Kdsr) (Mus musculus (Mouse)).